A 262-amino-acid chain; its full sequence is Catechol O-methyltransferase domain-containing protein 1 (262 aa).

A helical; Signal-anchor for type II membrane protein membrane pass occupies residues 12 to 32 (AALALGSAALGAAFATGLFLG). S-adenosyl-L-methionine-binding positions include aspartate 108, 110 to 111 (GT), serine 116, glutamate 134, valine 135, alanine 163, aspartate 185, aspartate 187, and tyrosine 194.

The protein belongs to the class I-like SAM-binding methyltransferase superfamily. Cation-dependent O-methyltransferase family. As to quaternary structure, homodimer.

It localises to the membrane. Putative O-methyltransferase. This is Catechol O-methyltransferase domain-containing protein 1 (COMTD1) from Homo sapiens (Human).